A 355-amino-acid chain; its full sequence is Uroporphyrinogen decarboxylase (355 aa).

Substrate contacts are provided by residues 27–31 (RQAGR), D77, Y154, T209, and H327.

The protein belongs to the uroporphyrinogen decarboxylase family. Homodimer.

The protein resides in the cytoplasm. It catalyses the reaction uroporphyrinogen III + 4 H(+) = coproporphyrinogen III + 4 CO2. Its pathway is porphyrin-containing compound metabolism; protoporphyrin-IX biosynthesis; coproporphyrinogen-III from 5-aminolevulinate: step 4/4. Catalyzes the decarboxylation of four acetate groups of uroporphyrinogen-III to yield coproporphyrinogen-III. The sequence is that of Uroporphyrinogen decarboxylase from Pseudoalteromonas atlantica (strain T6c / ATCC BAA-1087).